A 769-amino-acid chain; its full sequence is Calcium up-regulated protein F (769 aa).

The segment at 1 to 21 is disordered; it reads MINIKDISKSSNQSEEKSLKG. 2 consecutive Ricin B-type lectin domains span residues 25-145 and 116-249; these read KTKY…WTTF and QGNG…WGIN.

Belongs to the cup family.

It is found in the cytoplasm. The protein resides in the membrane. May play an important role in stabilizing and/or regulating the cell membrane during Ca(2+) stress or certain stages of development. The polypeptide is Calcium up-regulated protein F (cupF) (Dictyostelium discoideum (Social amoeba)).